Reading from the N-terminus, the 164-residue chain is R-phycoerythrin alpha chain (164 aa).

Residues Cys-82 and Cys-139 each contribute to the (2R,3E)-phycoerythrobilin site.

Belongs to the phycobiliprotein family. As to quaternary structure, heterodimer of an alpha and a beta chain. In terms of processing, contains two covalently linked bilin chromophores.

It localises to the plastid. It is found in the chloroplast thylakoid membrane. Its function is as follows. Light-harvesting photosynthetic bile pigment-protein from the phycobiliprotein complex. This chain is R-phycoerythrin alpha chain (cpeA), found in Pyropia haitanensis (Red seaweed).